Consider the following 160-residue polypeptide: Putative transcriptional regulator protein YobU (160 aa).

The polypeptide is Putative transcriptional regulator protein YobU (yobU) (Bacillus subtilis (strain 168)).